The sequence spans 330 residues: D-cysteine desulfhydrase (330 aa).

N6-(pyridoxal phosphate)lysine is present on K52.

It belongs to the ACC deaminase/D-cysteine desulfhydrase family. Homodimer. Requires pyridoxal 5'-phosphate as cofactor.

The catalysed reaction is D-cysteine + H2O = hydrogen sulfide + pyruvate + NH4(+) + H(+). In terms of biological role, catalyzes the alpha,beta-elimination reaction of D-cysteine and of several D-cysteine derivatives. It could be a defense mechanism against D-cysteine. The sequence is that of D-cysteine desulfhydrase from Serratia proteamaculans (strain 568).